The primary structure comprises 142 residues: MKTFTATPETVTRDWFVVDADGKTLGRIATEIATRLRGKHKPEYTPHVDTGDYIIVVNAEKVTVTGNKAKGKTYYSHSGFPGGIKQISFEKLQAQKPEMIIEKAVKGMLPKGPLGRAMFRKLKVYAGAEHNHTAQQPQVLDI.

This sequence belongs to the universal ribosomal protein uL13 family. As to quaternary structure, part of the 50S ribosomal subunit.

In terms of biological role, this protein is one of the early assembly proteins of the 50S ribosomal subunit, although it is not seen to bind rRNA by itself. It is important during the early stages of 50S assembly. The polypeptide is Large ribosomal subunit protein uL13 (Shewanella baltica (strain OS223)).